Consider the following 873-residue polypeptide: Leucine--tRNA ligase (873 aa).

Residues P42–H52 carry the 'HIGH' region motif. Positions K628–S632 match the 'KMSKS' region motif. K631 serves as a coordination point for ATP.

This sequence belongs to the class-I aminoacyl-tRNA synthetase family.

The protein localises to the cytoplasm. It carries out the reaction tRNA(Leu) + L-leucine + ATP = L-leucyl-tRNA(Leu) + AMP + diphosphate. The protein is Leucine--tRNA ligase of Aromatoleum aromaticum (strain DSM 19018 / LMG 30748 / EbN1) (Azoarcus sp. (strain EbN1)).